The primary structure comprises 140 residues: MAIERTFSMIKPDATKRNLTGAITKMLEDAGLRVVASKRVWMSRREAEGFYAVHKDRPFFGELVEGMTSGPTVVQVLEGEGAILKNREIMGATNPANADEGTIRKVHALSIGENSVHGSDAPETAAQEIKYWFSDTEIVG.

Residues lysine 11, phenylalanine 59, arginine 87, threonine 93, arginine 104, and asparagine 114 each coordinate ATP. The active-site Pros-phosphohistidine intermediate is histidine 117.

It belongs to the NDK family. Homotetramer. It depends on Mg(2+) as a cofactor.

The protein localises to the cytoplasm. It catalyses the reaction a 2'-deoxyribonucleoside 5'-diphosphate + ATP = a 2'-deoxyribonucleoside 5'-triphosphate + ADP. The catalysed reaction is a ribonucleoside 5'-diphosphate + ATP = a ribonucleoside 5'-triphosphate + ADP. Its function is as follows. Major role in the synthesis of nucleoside triphosphates other than ATP. The ATP gamma phosphate is transferred to the NDP beta phosphate via a ping-pong mechanism, using a phosphorylated active-site intermediate. The protein is Nucleoside diphosphate kinase of Rhizobium etli (strain CIAT 652).